The following is a 444-amino-acid chain: Transcription activator AFTR-2 (444 aa).

A DNA-binding region (zn(2)-C6 fungal-type) is located at residues 16–43 (CDFCTQSKLRCNKNKPSCRRCTLQQQPC). Residues 49-88 (RRTGRPPKHPRKANDCQEANGQHGDQDPVTSTPGGSYQQQ) are disordered. Residues 50–59 (RTGRPPKHPR) are compositionally biased toward basic residues. The segment covering 76–88 (PVTSTPGGSYQQQ) has biased composition (polar residues).

The protein localises to the nucleus. Functionally, transcription factor that regulates the expression of the gene clusters that mediate the biosynthesis of the host-selective toxins (HSTs) AF-toxins responsible for Alternaria black spot of strawberry disease by the strawberry pathotype. On cellular level, AF-toxins affect plasma membrane of susceptible cells and cause a sudden increase in loss of K(+) after a few minutes of toxin treatment. The polypeptide is Transcription activator AFTR-2 (Alternaria alternata (Alternaria rot fungus)).